The chain runs to 374 residues: Protein-glutamate methylesterase/protein-glutamine glutaminase (374 aa).

One can recognise a Response regulatory domain in the interval 4–121 (KVLVVDDSGF…SRNPDKVKQM (118 aa)). Residue Asp-55 is modified to 4-aspartylphosphate. The disordered stretch occupies residues 144 to 186 (PVAAPVPASSPAPASSFASPAPARPAATARAAAPAASHSPAPK). Residues 154–183 (PAPASSFASPAPARPAATARAAAPAASHSP) show a composition bias toward low complexity. The region spanning 183 to 374 (PAPKRKPYKL…IGKHLVEACV (192 aa)) is the CheB-type methylesterase domain. Residues Ser-198, His-225, and Asp-318 contribute to the active site.

It belongs to the CheB family. Phosphorylated by CheA. Phosphorylation of the N-terminal regulatory domain activates the methylesterase activity.

It is found in the cytoplasm. It carries out the reaction [protein]-L-glutamate 5-O-methyl ester + H2O = L-glutamyl-[protein] + methanol + H(+). The catalysed reaction is L-glutaminyl-[protein] + H2O = L-glutamyl-[protein] + NH4(+). In terms of biological role, involved in chemotaxis. Part of a chemotaxis signal transduction system that modulates chemotaxis in response to various stimuli. Catalyzes the demethylation of specific methylglutamate residues introduced into the chemoreceptors (methyl-accepting chemotaxis proteins or MCP) by CheR. Also mediates the irreversible deamidation of specific glutamine residues to glutamic acid. This is Protein-glutamate methylesterase/protein-glutamine glutaminase from Pseudomonas putida (Arthrobacter siderocapsulatus).